Here is a 372-residue protein sequence, read N- to C-terminus: 3-ketodihydrosphingosine reductase TSC10 (372 aa).

Residue V64 coordinates NADP(+). Residues G67, S69, G71, R92, K96, D123, and L124 each coordinate NADPH. Positions 67 to 71 (GGSQG) match the GXSXG motif. D123 is an NADP(+) binding site. S205 serves as the catalytic Proton donor. NADP(+)-binding residues include Y219, K223, and S254. Y219 acts as the Proton acceptor in catalysis. K223 serves as the catalytic Lowers pKa of active site Tyr. A helical transmembrane segment spans residues 321-341 (LLQIPLAIFMCIFSPVWNAFV).

Belongs to the short-chain dehydrogenases/reductases (SDR) family.

It is found in the endoplasmic reticulum membrane. It carries out the reaction sphinganine + NADP(+) = 3-oxosphinganine + NADPH + H(+). It participates in lipid metabolism; sphingolipid metabolism. In terms of biological role, catalyzes the reduction of 3'-oxosphinganine (3-ketodihydrosphingosine/KDS) to sphinganine (dihydrosphingosine/DHS), the second step of de novo sphingolipid biosynthesis. This is 3-ketodihydrosphingosine reductase TSC10 (TSC10) from Yarrowia lipolytica (strain CLIB 122 / E 150) (Yeast).